We begin with the raw amino-acid sequence, 692 residues long: Catalase-B (692 aa).

Catalysis depends on residues H69 and N142. Y356 contributes to the heme binding site.

This sequence belongs to the catalase family. The cofactor is heme.

Its subcellular location is the cytoplasm. The catalysed reaction is 2 H2O2 = O2 + 2 H2O. Occurs in almost all aerobically respiring organisms and serves to protect cells from the toxic effects of hydrogen peroxide. Its accumulation in prespore cells affords the spores protection from oxidation during prolonged dormancy. Required for normal developmental timing, possibly through a regulatory role in differentiation and morphogenesis. The protein is Catalase-B (catB) of Dictyostelium discoideum (Social amoeba).